Reading from the N-terminus, the 484-residue chain is 3-isopropylmalate dehydratase large subunit (484 aa).

[4Fe-4S] cluster contacts are provided by cysteine 352, cysteine 412, and cysteine 415. A disordered region spans residues 462 to 484 (GTLSSPSDLDPAPESAAVSSSAA).

Belongs to the aconitase/IPM isomerase family. LeuC type 1 subfamily. As to quaternary structure, heterodimer of LeuC and LeuD. [4Fe-4S] cluster serves as cofactor.

It carries out the reaction (2R,3S)-3-isopropylmalate = (2S)-2-isopropylmalate. The protein operates within amino-acid biosynthesis; L-leucine biosynthesis; L-leucine from 3-methyl-2-oxobutanoate: step 2/4. Its function is as follows. Catalyzes the isomerization between 2-isopropylmalate and 3-isopropylmalate, via the formation of 2-isopropylmaleate. The protein is 3-isopropylmalate dehydratase large subunit of Arthrobacter sp. (strain FB24).